The sequence spans 145 residues: uncharacterized protein (145 aa).

The interval 62–145 is disordered; it reads LPSVGGRMTA…QLPQQGGCPG (84 aa). Residues 84–95 are compositionally biased toward pro residues; sequence ASSPEDPPLPHP.

This is an uncharacterized protein from Homo sapiens (Human).